The primary structure comprises 187 residues: Phosphatidylethanolamine-binding protein 2 (187 aa).

3 positions are modified to phosphoserine: Ser-13, Ser-52, and Ser-54.

This sequence belongs to the phosphatidylethanolamine-binding protein family. As to expression, testis specific.

The protein resides in the cytoplasm. Its function is as follows. May bind to phospholipids. May act as serine protease inhibitor. This is Phosphatidylethanolamine-binding protein 2 (Pbp2) from Mus musculus (Mouse).